Here is a 742-residue protein sequence, read N- to C-terminus: Phosphoribosylformylglycinamidine synthase subunit PurL (742 aa).

His53 is a catalytic residue. Positions 56 and 95 each coordinate ATP. Glu97 serves as a coordination point for Mg(2+). Substrate contacts are provided by residues Ser98 to His101 and Arg120. The active-site Proton acceptor is His99. Residue Asp121 coordinates Mg(2+). Position 244 (Gln244) interacts with substrate. Asp274 is a Mg(2+) binding site. Substrate is bound at residue Glu318–Gln320. Asp501 and Gly538 together coordinate ATP. Asn539 is a binding site for Mg(2+). Ser541 contacts substrate.

This sequence belongs to the FGAMS family. As to quaternary structure, monomer. Part of the FGAM synthase complex composed of 1 PurL, 1 PurQ and 2 PurS subunits.

The protein localises to the cytoplasm. The enzyme catalyses N(2)-formyl-N(1)-(5-phospho-beta-D-ribosyl)glycinamide + L-glutamine + ATP + H2O = 2-formamido-N(1)-(5-O-phospho-beta-D-ribosyl)acetamidine + L-glutamate + ADP + phosphate + H(+). The protein operates within purine metabolism; IMP biosynthesis via de novo pathway; 5-amino-1-(5-phospho-D-ribosyl)imidazole from N(2)-formyl-N(1)-(5-phospho-D-ribosyl)glycinamide: step 1/2. In terms of biological role, part of the phosphoribosylformylglycinamidine synthase complex involved in the purines biosynthetic pathway. Catalyzes the ATP-dependent conversion of formylglycinamide ribonucleotide (FGAR) and glutamine to yield formylglycinamidine ribonucleotide (FGAM) and glutamate. The FGAM synthase complex is composed of three subunits. PurQ produces an ammonia molecule by converting glutamine to glutamate. PurL transfers the ammonia molecule to FGAR to form FGAM in an ATP-dependent manner. PurS interacts with PurQ and PurL and is thought to assist in the transfer of the ammonia molecule from PurQ to PurL. The chain is Phosphoribosylformylglycinamidine synthase subunit PurL from Limosilactobacillus reuteri (strain DSM 20016) (Lactobacillus reuteri).